Here is a 224-residue protein sequence, read N- to C-terminus: Large ribosomal subunit protein uL4 (224 aa).

The disordered stretch occupies residues 54-73 (NRSEVSHSTKKPFRQKGTGN).

This sequence belongs to the universal ribosomal protein uL4 family. As to quaternary structure, part of the 50S ribosomal subunit.

One of the primary rRNA binding proteins, this protein initially binds near the 5'-end of the 23S rRNA. It is important during the early stages of 50S assembly. It makes multiple contacts with different domains of the 23S rRNA in the assembled 50S subunit and ribosome. In terms of biological role, forms part of the polypeptide exit tunnel. The protein is Large ribosomal subunit protein uL4 of Chlamydia felis (strain Fe/C-56) (Chlamydophila felis).